A 299-amino-acid chain; its full sequence is Aspartate carbamoyltransferase catalytic subunit (299 aa).

Positions 51 and 52 each coordinate carbamoyl phosphate. Lys-80 provides a ligand contact to L-aspartate. Carbamoyl phosphate is bound by residues Arg-101, His-129, and Gln-132. L-aspartate contacts are provided by Arg-162 and Arg-221. Residues Leu-260 and Pro-261 each contribute to the carbamoyl phosphate site.

It belongs to the aspartate/ornithine carbamoyltransferase superfamily. ATCase family. In terms of assembly, heterooligomer of catalytic and regulatory chains.

It carries out the reaction carbamoyl phosphate + L-aspartate = N-carbamoyl-L-aspartate + phosphate + H(+). Its pathway is pyrimidine metabolism; UMP biosynthesis via de novo pathway; (S)-dihydroorotate from bicarbonate: step 2/3. Functionally, catalyzes the condensation of carbamoyl phosphate and aspartate to form carbamoyl aspartate and inorganic phosphate, the committed step in the de novo pyrimidine nucleotide biosynthesis pathway. In Sulfolobus acidocaldarius (strain ATCC 33909 / DSM 639 / JCM 8929 / NBRC 15157 / NCIMB 11770), this protein is Aspartate carbamoyltransferase catalytic subunit.